A 98-amino-acid polypeptide reads, in one-letter code: Large ribosomal subunit protein eL21 (98 aa).

Residues 1-24 (MVKMSHGPRSGSRRKLTKSAEERK) are disordered.

It belongs to the eukaryotic ribosomal protein eL21 family.

In Thermoplasma acidophilum (strain ATCC 25905 / DSM 1728 / JCM 9062 / NBRC 15155 / AMRC-C165), this protein is Large ribosomal subunit protein eL21 (rpl21e).